The following is a 508-amino-acid chain: NADH-quinone oxidoreductase subunit N 2 (508 aa).

14 consecutive transmembrane segments (helical) span residues 14–34 (SYVAILPHLIVTATLLVVIVL), 43–63 (SLVWVTLGGVVLAMLSIWYTA), 90–110 (FTFFMNGVLLGIAALVILLSA), 119–139 (GAHMEFYEIILAVTLGMMFMV), 144–164 (LLTIYIGLELTSISSYVLAGI), 179–199 (FLTGATASAVLLFGLSLIYGV), 223–243 (GPALTPLLVAGMAFLMVGFGF), 275–295 (GAAMAAILRVFVGGLGVAPFT), 298–318 (WALIWALAAAASMTVGNLVAL), 327–347 (MAYSSIAQAGYILVGVAASGL), 353–373 (ISSVLFYVMAYAVTNLGIFAV), 400–420 (AWALLLFFVSLIGIPPTVGFL), 433–455 (GYLWLAVLMAVNSVISVGYYYRV), and 473–493 (TGISATVLLSLLGVVALTIFA).

It belongs to the complex I subunit 2 family. NDH-1 is composed of 14 different subunits. Subunits NuoA, H, J, K, L, M, N constitute the membrane sector of the complex.

The protein resides in the cell membrane. It carries out the reaction a quinone + NADH + 5 H(+)(in) = a quinol + NAD(+) + 4 H(+)(out). Functionally, NDH-1 shuttles electrons from NADH, via FMN and iron-sulfur (Fe-S) centers, to quinones in the respiratory chain. The immediate electron acceptor for the enzyme in this species is believed to be a menaquinone. Couples the redox reaction to proton translocation (for every two electrons transferred, four hydrogen ions are translocated across the cytoplasmic membrane), and thus conserves the redox energy in a proton gradient. The sequence is that of NADH-quinone oxidoreductase subunit N 2 from Symbiobacterium thermophilum (strain DSM 24528 / JCM 14929 / IAM 14863 / T).